Here is a 101-residue protein sequence, read N- to C-terminus: Urease subunit beta (101 aa).

This sequence belongs to the urease beta subunit family. As to quaternary structure, heterotrimer of UreA (gamma), UreB (beta) and UreC (alpha) subunits. Three heterotrimers associate to form the active enzyme.

It is found in the cytoplasm. It carries out the reaction urea + 2 H2O + H(+) = hydrogencarbonate + 2 NH4(+). The protein operates within nitrogen metabolism; urea degradation; CO(2) and NH(3) from urea (urease route): step 1/1. This is Urease subunit beta from Rhodopseudomonas palustris (strain HaA2).